The chain runs to 449 residues: C4-dicarboxylate transport protein (449 aa).

8 consecutive transmembrane segments (helical) span residues 18–38, 61–81, 93–113, 159–179, 202–222, 244–264, 311–331, and 369–389; these read PFYLQLYFWVIIAIILGALLG, MIISPVIFLTIVTGIASVAHV, VYFLFFSTLALLLGLVVAHVV, FVGDNILQVLFVAVLFGIALA, LVQMLMKMAPIGAFGAIAFTI, SLLFVLVILGAVSWLCGFSIL, GYSFNLDGTNIYMTLAALFIA, and AATLAVVPEVPIAGMALILGV.

The protein belongs to the dicarboxylate/amino acid:cation symporter (DAACS) (TC 2.A.23) family.

It is found in the cell inner membrane. In terms of biological role, responsible for the transport of dicarboxylates such as succinate, fumarate, and malate from the periplasm across the membrane. The protein is C4-dicarboxylate transport protein of Xylella fastidiosa (strain M12).